A 153-amino-acid chain; its full sequence is Ribosomal RNA large subunit methyltransferase H (153 aa).

S-adenosyl-L-methionine-binding positions include Ile75, Gly103, and 121–126; that span reads LSAMTF.

It belongs to the RNA methyltransferase RlmH family. Homodimer.

It is found in the cytoplasm. The catalysed reaction is pseudouridine(1915) in 23S rRNA + S-adenosyl-L-methionine = N(3)-methylpseudouridine(1915) in 23S rRNA + S-adenosyl-L-homocysteine + H(+). Functionally, specifically methylates the pseudouridine at position 1915 (m3Psi1915) in 23S rRNA. In Helicobacter hepaticus (strain ATCC 51449 / 3B1), this protein is Ribosomal RNA large subunit methyltransferase H.